An 886-amino-acid polypeptide reads, in one-letter code: Leucine--tRNA ligase (886 aa).

Positions 46-56 (PYPSGKLHMGH) match the 'HIGH' region motif. The 'KMSKS' region signature appears at 638 to 642 (TMSKS). Lys641 is an ATP binding site.

This sequence belongs to the class-I aminoacyl-tRNA synthetase family.

The protein localises to the cytoplasm. The catalysed reaction is tRNA(Leu) + L-leucine + ATP = L-leucyl-tRNA(Leu) + AMP + diphosphate. The chain is Leucine--tRNA ligase from Polaromonas sp. (strain JS666 / ATCC BAA-500).